We begin with the raw amino-acid sequence, 193 residues long: 3-isopropylmalate dehydratase small subunit (193 aa).

The protein belongs to the LeuD family. LeuD type 1 subfamily. As to quaternary structure, heterodimer of LeuC and LeuD.

The enzyme catalyses (2R,3S)-3-isopropylmalate = (2S)-2-isopropylmalate. The protein operates within amino-acid biosynthesis; L-leucine biosynthesis; L-leucine from 3-methyl-2-oxobutanoate: step 2/4. Catalyzes the isomerization between 2-isopropylmalate and 3-isopropylmalate, via the formation of 2-isopropylmaleate. This is 3-isopropylmalate dehydratase small subunit from Listeria monocytogenes serotype 4b (strain CLIP80459).